Here is a 165-residue protein sequence, read N- to C-terminus: Protein C2-DOMAIN ABA-RELATED 8 (165 aa).

Position 1 is an N-acetylmethionine (methionine 1). Residues 1–106 form the C2 domain; the sequence is MENLVGLLRI…QGTDIQELTN (106 aa). Residues arginine 21, aspartate 22, aspartate 27, aspartate 73, lysine 74, aspartate 75, and aspartate 81 each coordinate Ca(2+).

This sequence belongs to the plant CAR protein family. As to quaternary structure, binds to PYR/PYL/RCAR abscisic acid intracellular receptors in an ABA-independent manner, both at the plasma membrane and in the nucleus.

It localises to the cell membrane. The protein localises to the nucleus. Functionally, stimulates the GTPase/ATPase activities of Obg-like ATPases. Mediates the transient calcium-dependent interaction of PYR/PYL/RCAR abscisic acid (ABA) receptors with the plasma membrane and thus regulates ABA sensitivity. The polypeptide is Protein C2-DOMAIN ABA-RELATED 8 (Arabidopsis thaliana (Mouse-ear cress)).